The primary structure comprises 251 residues: Uroporphyrinogen-III C-methyltransferase (251 aa).

Residues P17, G93–D95, T123–S124, M177, and A206 contribute to the S-adenosyl-L-homocysteine site.

It belongs to the precorrin methyltransferase family.

It localises to the plastid. Its subcellular location is the chloroplast. The catalysed reaction is uroporphyrinogen III + 2 S-adenosyl-L-methionine = precorrin-2 + 2 S-adenosyl-L-homocysteine + H(+). Its pathway is cofactor biosynthesis; adenosylcobalamin biosynthesis; precorrin-2 from uroporphyrinogen III: step 1/1. It functions in the pathway porphyrin-containing compound metabolism; siroheme biosynthesis; precorrin-2 from uroporphyrinogen III: step 1/1. Catalyzes the two successive C-2 and C-7 methylation reactions involved in the conversion of uroporphyrinogen III to precorrin-2 via the intermediate formation of precorrin-1. It is a step in the biosynthesis of both cobalamin (vitamin B12) and siroheme. The polypeptide is Uroporphyrinogen-III C-methyltransferase (cobA) (Cyanidium caldarium (Red alga)).